We begin with the raw amino-acid sequence, 88 residues long: Co-chaperonin GroES (88 aa).

The protein belongs to the GroES chaperonin family. Heptamer of 7 subunits arranged in a ring. Interacts with the chaperonin GroEL.

Its subcellular location is the cytoplasm. Functionally, together with the chaperonin GroEL, plays an essential role in assisting protein folding. The GroEL-GroES system forms a nano-cage that allows encapsulation of the non-native substrate proteins and provides a physical environment optimized to promote and accelerate protein folding. GroES binds to the apical surface of the GroEL ring, thereby capping the opening of the GroEL channel. This chain is Co-chaperonin GroES, found in Thermodesulfovibrio yellowstonii (strain ATCC 51303 / DSM 11347 / YP87).